A 290-amino-acid chain; its full sequence is Cbb3-type cytochrome c oxidase subunit FixP (290 aa).

Residues 33-53 (WWVITFYITIVWAIGYWIVYP) traverse the membrane as a helical segment. Cytochrome c domains follow at residues 109–198 (LARA…RSLS) and 206–287 (YDAA…HSLG). Heme c-binding residues include Cys-122, Cys-125, His-126, Met-173, Cys-219, Cys-222, His-223, and Met-264.

The protein belongs to the CcoP / FixP family. In terms of assembly, component of the cbb3-type cytochrome c oxidase at least composed of FixN, FixO, FixQ and FixP. Heme c serves as cofactor.

The protein resides in the cell inner membrane. Its pathway is energy metabolism; oxidative phosphorylation. C-type cytochrome. Part of the cbb3-type cytochrome c oxidase complex. FixP subunit is required for transferring electrons from donor cytochrome c via its heme groups to FixO subunit. From there, electrons are shuttled to the catalytic binuclear center of FixN subunit where oxygen reduction takes place. The complex also functions as a proton pump. The polypeptide is Cbb3-type cytochrome c oxidase subunit FixP (Bradyrhizobium sp. (strain ORS 278)).